A 201-amino-acid polypeptide reads, in one-letter code: Putative ankyrin repeat protein R868 (201 aa).

ANK repeat units follow at residues 125–154 (YENN…NCYF) and 156–188 (KAKK…DYNF).

The polypeptide is Putative ankyrin repeat protein R868 (Acanthamoeba polyphaga (Amoeba)).